Reading from the N-terminus, the 376-residue chain is Ribosomal RNA large subunit methyltransferase G (376 aa).

This sequence belongs to the methyltransferase superfamily. RlmG family.

It localises to the cytoplasm. It carries out the reaction guanosine(1835) in 23S rRNA + S-adenosyl-L-methionine = N(2)-methylguanosine(1835) in 23S rRNA + S-adenosyl-L-homocysteine + H(+). Specifically methylates the guanine in position 1835 (m2G1835) of 23S rRNA. In Klebsiella pneumoniae (strain 342), this protein is Ribosomal RNA large subunit methyltransferase G.